Here is a 396-residue protein sequence, read N- to C-terminus: L-aspartate--glyoxylate aminotransferase (396 aa).

Position 196 is an N6-(pyridoxal phosphate)lysine (K196).

It belongs to the class-V pyridoxal-phosphate-dependent aminotransferase family. It depends on pyridoxal 5'-phosphate as a cofactor.

The enzyme catalyses oxaloacetate + glycine = glyoxylate + L-aspartate. Its function is as follows. Catalyzes the transamination of glyoxylate into glycine using L-aspartate as the preferred amino group donor. Is essential for the growth of P.denitrificans in the presence of glycolate and glyoxylate since it functions in glyoxylate assimilation via the beta-hydroxyaspartate cycle (BHAC). Can catalyze the reverse reaction in vitro, and also use L-serine and L-glutamate as amino group donor, but with much less efficiency than L-aspartate. The protein is L-aspartate--glyoxylate aminotransferase of Paracoccus denitrificans (strain Pd 1222).